Here is a 226-residue protein sequence, read N- to C-terminus: RNA pyrophosphohydrolase (226 aa).

Residues glycine 6 to threonine 149 enclose the Nudix hydrolase domain. The Nudix box signature appears at glycine 38 to glycine 59. Residues methionine 197–glycine 226 are disordered.

This sequence belongs to the Nudix hydrolase family. RppH subfamily. The cofactor is a divalent metal cation.

Functionally, accelerates the degradation of transcripts by removing pyrophosphate from the 5'-end of triphosphorylated RNA, leading to a more labile monophosphorylated state that can stimulate subsequent ribonuclease cleavage. The sequence is that of RNA pyrophosphohydrolase from Paracidovorax citrulli (strain AAC00-1) (Acidovorax citrulli).